Reading from the N-terminus, the 106-residue chain is Nucleoid-associated protein XAC1110 (106 aa).

Over residues 80–89 (KIDAESKDRM) the composition is skewed to basic and acidic residues. The interval 80 to 106 (KIDAESKDRMGSATAGMQLPPGMKLPF) is disordered.

Belongs to the YbaB/EbfC family. As to quaternary structure, homodimer.

It is found in the cytoplasm. The protein resides in the nucleoid. Binds to DNA and alters its conformation. May be involved in regulation of gene expression, nucleoid organization and DNA protection. The polypeptide is Nucleoid-associated protein XAC1110 (Xanthomonas axonopodis pv. citri (strain 306)).